We begin with the raw amino-acid sequence, 125 residues long: Small ribosomal subunit protein eS8 (125 aa).

Polar residues predominate over residues 1–11; that stretch reads MAISQGKSTRL. Residues 1-38 are disordered; sequence MAISQGKSTRLPSGARNVANRGKRKAELGRDPAETRVD. Positions 25–38 are enriched in basic and acidic residues; sequence KAELGRDPAETRVD.

It belongs to the eukaryotic ribosomal protein eS8 family. In terms of assembly, part of the 30S ribosomal subunit.

The chain is Small ribosomal subunit protein eS8 from Methanobrevibacter smithii (strain ATCC 35061 / DSM 861 / OCM 144 / PS).